Here is a 154-residue protein sequence, read N- to C-terminus: MQKQIEIFTDGSCLGNPGAGGIGAVLRYKQHEKMLSKGYFKTTNNRMELRAVIEALNTLKEPCLITLYSDSQYMKNGITKWIFNWKKNNWKASSGKPVKNQDLWIALDESIQRHKINWQWVKGHAGHRENEICDELAKKGAENPTLEDMGYIEE.

The RNase H type-1 domain occupies 1-142 (MQKQIEIFTD…CDELAKKGAE (142 aa)). Mg(2+) is bound by residues Asp10, Glu48, Asp70, and Asp134.

This sequence belongs to the RNase H family. Monomer. It depends on Mg(2+) as a cofactor.

It is found in the cytoplasm. It carries out the reaction Endonucleolytic cleavage to 5'-phosphomonoester.. Its function is as follows. Endonuclease that specifically degrades the RNA of RNA-DNA hybrids. This chain is Ribonuclease H, found in Haemophilus influenzae (strain 86-028NP).